The following is a 231-amino-acid chain: Transmembrane gamma-carboxyglutamic acid protein 3 (231 aa).

Residues 1 to 19 (MAVFLEAKDAHSVLKRFPR) constitute a propeptide that is removed on maturation. Positions 20–65 (ANEFLEELRQGTIERECMEEICSYEEVKEVFENKEKTMEFWKGYPN) constitute a Gla domain. The Extracellular segment spans residues 20–78 (ANEFLEELRQGTIERECMEEICSYEEVKEVFENKEKTMEFWKGYPNAVYSVRDPSQSSD). 13 positions are modified to 4-carboxyglutamate: E22, E25, E26, E33, E35, E38, E39, E44, E45, E48, E51, E54, and E58. Cysteines 36 and 41 form a disulfide. A helical membrane pass occupies residues 79–101 (AMYVVVPLLGVALLIVIALFIIW). Topologically, residues 102-231 (RCQLQKATRH…IVAANPGADK (130 aa)) are cytoplasmic. Disordered regions lie at residues 140–165 (HSQGEPSGHREAANSPQVVLGPSRGG) and 182–231 (LSRL…GADK). Low complexity predominate over residues 202 to 213 (ESSSEEASVSYS).

In terms of processing, gla residues are produced after subsequent post-translational modifications of glutamate by a vitamin K-dependent gamma-carboxylase. In terms of tissue distribution, expressed in brain, lung, kidney and heart.

Its subcellular location is the membrane. This chain is Transmembrane gamma-carboxyglutamic acid protein 3 (PRRG3), found in Homo sapiens (Human).